The following is a 504-amino-acid chain: Cytochrome P450 2D9 (504 aa).

S249 carries the post-translational modification Phosphoserine. C446 is a heme binding site.

This sequence belongs to the cytochrome P450 family. It depends on heme as a cofactor.

It localises to the endoplasmic reticulum membrane. The protein localises to the microsome membrane. The enzyme catalyses an organic molecule + reduced [NADPH--hemoprotein reductase] + O2 = an alcohol + oxidized [NADPH--hemoprotein reductase] + H2O + H(+). Functionally, cytochromes P450 are a group of heme-thiolate monooxygenases. In liver microsomes, this enzyme is involved in an NADPH-dependent electron transport pathway. It oxidizes a variety of structurally unrelated compounds, including steroids, fatty acids, and xenobiotics. This Mus musculus (Mouse) protein is Cytochrome P450 2D9 (Cyp2d9).